The primary structure comprises 406 residues: Tryptophan 2,3-dioxygenase (406 aa).

Residues 72 to 76 and arginine 144 contribute to the substrate site; that span reads FIVTH. Residue histidine 328 coordinates heme. Residue threonine 342 coordinates substrate.

Belongs to the tryptophan 2,3-dioxygenase family. As to quaternary structure, homotetramer. Dimer of dimers. The cofactor is heme.

The catalysed reaction is L-tryptophan + O2 = N-formyl-L-kynurenine. The protein operates within amino-acid degradation; L-tryptophan degradation via kynurenine pathway; L-kynurenine from L-tryptophan: step 1/2. In terms of biological role, heme-dependent dioxygenase that catalyzes the oxidative cleavage of the L-tryptophan (L-Trp) pyrrole ring and converts L-tryptophan to N-formyl-L-kynurenine. Catalyzes the oxidative cleavage of the indole moiety. The polypeptide is Tryptophan 2,3-dioxygenase (Xenopus tropicalis (Western clawed frog)).